A 275-amino-acid chain; its full sequence is Rhamnulose-1-phosphate aldolase (275 aa).

Residue E117 is part of the active site. Zn(2+) is bound by residues H141, H143, and H212.

It belongs to the aldolase class II family. RhaD subfamily. As to quaternary structure, homotetramer. Requires Zn(2+) as cofactor.

Its subcellular location is the cytoplasm. It catalyses the reaction L-rhamnulose 1-phosphate = (S)-lactaldehyde + dihydroxyacetone phosphate. It participates in carbohydrate degradation; L-rhamnose degradation; glycerone phosphate from L-rhamnose: step 3/3. In terms of biological role, catalyzes the reversible cleavage of L-rhamnulose-1-phosphate to dihydroxyacetone phosphate (DHAP) and L-lactaldehyde. In Salmonella heidelberg (strain SL476), this protein is Rhamnulose-1-phosphate aldolase.